We begin with the raw amino-acid sequence, 582 residues long: Sulfite reductase [NADPH] hemoprotein beta-component (582 aa).

Residues 1–12 (MDLKVKVDRSRD) are compositionally biased toward basic and acidic residues. The interval 1–26 (MDLKVKVDRSRDVSQPLDKLGPDETL) is disordered. Positions 447, 453, 492, and 496 each coordinate [4Fe-4S] cluster. Residue Cys-496 participates in siroheme binding.

This sequence belongs to the nitrite and sulfite reductase 4Fe-4S domain family. As to quaternary structure, alpha(8)-beta(8). The alpha component is a flavoprotein, the beta component is a hemoprotein. Siroheme is required as a cofactor. The cofactor is [4Fe-4S] cluster.

The catalysed reaction is hydrogen sulfide + 3 NADP(+) + 3 H2O = sulfite + 3 NADPH + 4 H(+). It participates in sulfur metabolism; hydrogen sulfide biosynthesis; hydrogen sulfide from sulfite (NADPH route): step 1/1. In terms of biological role, component of the sulfite reductase complex that catalyzes the 6-electron reduction of sulfite to sulfide. This is one of several activities required for the biosynthesis of L-cysteine from sulfate. This is Sulfite reductase [NADPH] hemoprotein beta-component from Afipia carboxidovorans (strain ATCC 49405 / DSM 1227 / KCTC 32145 / OM5) (Oligotropha carboxidovorans).